The sequence spans 98 residues: Large ribosomal subunit protein uL23 (98 aa).

It belongs to the universal ribosomal protein uL23 family. In terms of assembly, part of the 50S ribosomal subunit. Contacts protein L29, and trigger factor when it is bound to the ribosome.

Its function is as follows. One of the early assembly proteins it binds 23S rRNA. One of the proteins that surrounds the polypeptide exit tunnel on the outside of the ribosome. Forms the main docking site for trigger factor binding to the ribosome. The protein is Large ribosomal subunit protein uL23 of Rickettsia prowazekii (strain Madrid E).